Reading from the N-terminus, the 236-residue chain is Phosphoribosylaminoimidazole-succinocarboxamide synthase (236 aa).

Belongs to the SAICAR synthetase family.

The enzyme catalyses 5-amino-1-(5-phospho-D-ribosyl)imidazole-4-carboxylate + L-aspartate + ATP = (2S)-2-[5-amino-1-(5-phospho-beta-D-ribosyl)imidazole-4-carboxamido]succinate + ADP + phosphate + 2 H(+). It functions in the pathway purine metabolism; IMP biosynthesis via de novo pathway; 5-amino-1-(5-phospho-D-ribosyl)imidazole-4-carboxamide from 5-amino-1-(5-phospho-D-ribosyl)imidazole-4-carboxylate: step 1/2. In Streptococcus equi subsp. zooepidemicus (strain H70), this protein is Phosphoribosylaminoimidazole-succinocarboxamide synthase.